Here is a 144-residue protein sequence, read N- to C-terminus: Transcription antitermination protein NusB (144 aa).

The protein belongs to the NusB family.

Functionally, involved in transcription antitermination. Required for transcription of ribosomal RNA (rRNA) genes. Binds specifically to the boxA antiterminator sequence of the ribosomal RNA (rrn) operons. The polypeptide is Transcription antitermination protein NusB (Carboxydothermus hydrogenoformans (strain ATCC BAA-161 / DSM 6008 / Z-2901)).